A 141-amino-acid chain; its full sequence is Large ribosomal subunit protein uL16 (141 aa).

The segment at 1–21 (MLMPKRVKYRKQQRGHNRGMA) is disordered.

It belongs to the universal ribosomal protein uL16 family. As to quaternary structure, part of the 50S ribosomal subunit.

In terms of biological role, binds 23S rRNA and is also seen to make contacts with the A and possibly P site tRNAs. The sequence is that of Large ribosomal subunit protein uL16 from Roseiflexus sp. (strain RS-1).